The sequence spans 356 residues: UDP-N-acetylglucosamine--N-acetylmuramyl-(pentapeptide) pyrophosphoryl-undecaprenol N-acetylglucosamine transferase (356 aa).

Residues arginine 166, serine 196, and glutamine 290 each coordinate UDP-N-acetyl-alpha-D-glucosamine.

The protein belongs to the glycosyltransferase 28 family. MurG subfamily.

The protein localises to the cell membrane. The catalysed reaction is Mur2Ac(oyl-L-Ala-gamma-D-Glu-L-Lys-D-Ala-D-Ala)-di-trans,octa-cis-undecaprenyl diphosphate + UDP-N-acetyl-alpha-D-glucosamine = beta-D-GlcNAc-(1-&gt;4)-Mur2Ac(oyl-L-Ala-gamma-D-Glu-L-Lys-D-Ala-D-Ala)-di-trans,octa-cis-undecaprenyl diphosphate + UDP + H(+). The protein operates within cell wall biogenesis; peptidoglycan biosynthesis. In terms of biological role, cell wall formation. Catalyzes the transfer of a GlcNAc subunit on undecaprenyl-pyrophosphoryl-MurNAc-pentapeptide (lipid intermediate I) to form undecaprenyl-pyrophosphoryl-MurNAc-(pentapeptide)GlcNAc (lipid intermediate II). In Staphylococcus aureus (strain bovine RF122 / ET3-1), this protein is UDP-N-acetylglucosamine--N-acetylmuramyl-(pentapeptide) pyrophosphoryl-undecaprenol N-acetylglucosamine transferase.